A 25-amino-acid chain; its full sequence is Granule-bound starch synthase 1, chloroplastic/amyloplastic (25 aa).

Lys-16 lines the ADP-alpha-D-glucose pocket.

It belongs to the glycosyltransferase 1 family. Bacterial/plant glycogen synthase subfamily. As to expression, expressed in endosperm.

It is found in the plastid. It localises to the chloroplast. The protein resides in the amyloplast. The enzyme catalyses an NDP-alpha-D-glucose + [(1-&gt;4)-alpha-D-glucosyl](n) = [(1-&gt;4)-alpha-D-glucosyl](n+1) + a ribonucleoside 5'-diphosphate + H(+). The protein operates within glycan biosynthesis; starch biosynthesis. Functionally, required for the synthesis of amylose in endosperm. In Fagopyrum esculentum (Common buckwheat), this protein is Granule-bound starch synthase 1, chloroplastic/amyloplastic.